The primary structure comprises 518 residues: 2-isopropylmalate synthase (518 aa).

Positions 5–267 constitute a Pyruvate carboxyltransferase domain; sequence VIIFDTTLRD…STKIKHKEIY (263 aa). Mn(2+) contacts are provided by aspartate 14, histidine 202, histidine 204, and asparagine 238. Residues 392–518 form a regulatory domain region; the sequence is SLSFFSVQSI…KLKKLKKINN (127 aa).

Belongs to the alpha-IPM synthase/homocitrate synthase family. LeuA type 1 subfamily. Homodimer. It depends on Mn(2+) as a cofactor.

The protein resides in the cytoplasm. The catalysed reaction is 3-methyl-2-oxobutanoate + acetyl-CoA + H2O = (2S)-2-isopropylmalate + CoA + H(+). It participates in amino-acid biosynthesis; L-leucine biosynthesis; L-leucine from 3-methyl-2-oxobutanoate: step 1/4. Its function is as follows. Catalyzes the condensation of the acetyl group of acetyl-CoA with 3-methyl-2-oxobutanoate (2-ketoisovalerate) to form 3-carboxy-3-hydroxy-4-methylpentanoate (2-isopropylmalate). The polypeptide is 2-isopropylmalate synthase (Buchnera aphidicola subsp. Rhopalosiphum padi).